The following is a 142-amino-acid chain: Hemoglobin A subunit alpha-1 (142 aa).

One can recognise a Globin domain in the interval 2 to 142; the sequence is VLTAGDKANV…VATALTSKYR (141 aa). H59 serves as a coordination point for O2. Heme b is bound at residue H88.

This sequence belongs to the globin family. Tetramer of alpha-1, alpha-2 and two identical beta chains. Red blood cells.

Its function is as follows. Involved in oxygen transport from the lung to the various peripheral tissues. The polypeptide is Hemoglobin A subunit alpha-1 (Aldabrachelys gigantea (Aldabra giant tortoise)).